Reading from the N-terminus, the 545-residue chain is Triacylglycerol lipase ptl1 (545 aa).

Residues 182–358 (LYFNGGTAFG…EVCTPKNFIW (177 aa)) form the PNPLA domain. Positions 213 to 217 (GCASG) match the GXSXG motif.

The protein localises to the lipid droplet. It carries out the reaction a triacylglycerol + H2O = a diacylglycerol + a fatty acid + H(+). In terms of biological role, lipid particle-localized triacylglycerol (TAG) lipase. The lipid droplet/particle is a lipid storage compartment which serves as a depot of energy and building blocks for membrane lipid biosynthesis. Involved in the mobilization of the non-polar storage lipids triacylglycerols (TAGs) from lipid particles by hydrolysis of TAGs, releasing and supplying specific fatty acids to the appropriate metabolic pathways. The protein is Triacylglycerol lipase ptl1 (ptl1) of Schizosaccharomyces pombe (strain 972 / ATCC 24843) (Fission yeast).